The primary structure comprises 276 residues: Formamidopyrimidine-DNA glycosylase (276 aa).

P2 functions as the Schiff-base intermediate with DNA in the catalytic mechanism. E3 functions as the Proton donor in the catalytic mechanism. Catalysis depends on K58, which acts as the Proton donor; for beta-elimination activity. Positions 94, 112, and 157 each coordinate DNA. An FPG-type zinc finger spans residues 242–276; that stretch reads FVYDRAGQPCRVCGTPIKQIVQGQRSTYYCPTCQR. The active-site Proton donor; for delta-elimination activity is the R266.

Belongs to the FPG family. As to quaternary structure, monomer. Requires Zn(2+) as cofactor.

It carries out the reaction Hydrolysis of DNA containing ring-opened 7-methylguanine residues, releasing 2,6-diamino-4-hydroxy-5-(N-methyl)formamidopyrimidine.. It catalyses the reaction 2'-deoxyribonucleotide-(2'-deoxyribose 5'-phosphate)-2'-deoxyribonucleotide-DNA = a 3'-end 2'-deoxyribonucleotide-(2,3-dehydro-2,3-deoxyribose 5'-phosphate)-DNA + a 5'-end 5'-phospho-2'-deoxyribonucleoside-DNA + H(+). Involved in base excision repair of DNA damaged by oxidation or by mutagenic agents. Acts as a DNA glycosylase that recognizes and removes damaged bases. Has a preference for oxidized purines, such as 7,8-dihydro-8-oxoguanine (8-oxoG). Has AP (apurinic/apyrimidinic) lyase activity and introduces nicks in the DNA strand. Cleaves the DNA backbone by beta-delta elimination to generate a single-strand break at the site of the removed base with both 3'- and 5'-phosphates. This is Formamidopyrimidine-DNA glycosylase from Paraburkholderia phymatum (strain DSM 17167 / CIP 108236 / LMG 21445 / STM815) (Burkholderia phymatum).